The chain runs to 306 residues: UDP-3-O-acyl-N-acetylglucosamine deacetylase (306 aa).

H79, H238, and D242 together coordinate Zn(2+). H265 functions as the Proton donor in the catalytic mechanism.

The protein belongs to the LpxC family. It depends on Zn(2+) as a cofactor.

It catalyses the reaction a UDP-3-O-[(3R)-3-hydroxyacyl]-N-acetyl-alpha-D-glucosamine + H2O = a UDP-3-O-[(3R)-3-hydroxyacyl]-alpha-D-glucosamine + acetate. It functions in the pathway glycolipid biosynthesis; lipid IV(A) biosynthesis; lipid IV(A) from (3R)-3-hydroxytetradecanoyl-[acyl-carrier-protein] and UDP-N-acetyl-alpha-D-glucosamine: step 2/6. In terms of biological role, catalyzes the hydrolysis of UDP-3-O-myristoyl-N-acetylglucosamine to form UDP-3-O-myristoylglucosamine and acetate, the committed step in lipid A biosynthesis. The chain is UDP-3-O-acyl-N-acetylglucosamine deacetylase from Shewanella piezotolerans (strain WP3 / JCM 13877).